Here is a 622-residue protein sequence, read N- to C-terminus: Low affinity potassium transport system protein Kup (622 aa).

The next 12 helical transmembrane spans lie at 9 to 29, 49 to 69, 103 to 123, 137 to 157, 165 to 185, 213 to 233, 247 to 267, 276 to 296, 337 to 357, 363 to 383, 396 to 416, and 419 to 439; these read LPAITLAAIGVVYGDIGTSPL, VFGFLSLIFWLLIFVVSIKYL, VIMGLIGGSFFYGEVVITPAI, PQLDTWIVPLSIIVLTLLFMI, VGKLFAPIMLTWFLILAGLGL, VSFIALGAVVLSITGVEALYA, WFTVVLPSLTLNYFGQGALLL, PFFLLAPDWALIPLLIIAALA, IYIPFVNWMLYVAVVIVIVSF, LAAAYGIAVTGTMVLTSILST, FVALILIAFLCVDIPLFTANL, and LLSGGWLPLSLGTVMFIVMTT.

Belongs to the HAK/KUP transporter (TC 2.A.72) family.

It localises to the cell inner membrane. It catalyses the reaction K(+)(in) + H(+)(in) = K(+)(out) + H(+)(out). Its function is as follows. Responsible for the low-affinity transport of potassium into the cell. Likely operates as a K(+):H(+) symporter. This Escherichia fergusonii (strain ATCC 35469 / DSM 13698 / CCUG 18766 / IAM 14443 / JCM 21226 / LMG 7866 / NBRC 102419 / NCTC 12128 / CDC 0568-73) protein is Low affinity potassium transport system protein Kup.